We begin with the raw amino-acid sequence, 292 residues long: Diaminopimelate epimerase (292 aa).

N14 and N78 together coordinate substrate. The active-site Proton donor is the C87. Substrate-binding positions include G88–N89, N164, N197, and E221–R222. C230 functions as the Proton acceptor in the catalytic mechanism. G231–T232 provides a ligand contact to substrate.

The protein belongs to the diaminopimelate epimerase family. Homodimer.

Its subcellular location is the cytoplasm. It catalyses the reaction (2S,6S)-2,6-diaminopimelate = meso-2,6-diaminopimelate. The protein operates within amino-acid biosynthesis; L-lysine biosynthesis via DAP pathway; DL-2,6-diaminopimelate from LL-2,6-diaminopimelate: step 1/1. In terms of biological role, catalyzes the stereoinversion of LL-2,6-diaminopimelate (L,L-DAP) to meso-diaminopimelate (meso-DAP), a precursor of L-lysine and an essential component of the bacterial peptidoglycan. This Leifsonia xyli subsp. xyli (strain CTCB07) protein is Diaminopimelate epimerase.